The chain runs to 606 residues: MSSKRHILTAVAWPYANGPRHIGHVSGFGVPSDVFARFQRMSGNNVLMVSGTDEHGTPIQVLADQEGVSARELADRYNRIIAEDLVALGLSYDLFTRTTTANHYAVVQELFTGLYRNGYIFSKTTKGAISPSTGRTLPDRYVEGTCPICGYDGARGDQCDNCGKQLDPTDLINPRSKINGETPEFVDTEHFMLDLPAFAEQLSEWLKSKGGEWRPNVLKFSLNLLDELQPRAITRDLDWGVPIPLEGWRDQPNKRLYVWFDAVIGYLSASIEWAKRTGDPEAWRKWWQNSDAESFYFMGKDNIVFHSEIWPAMLLGYSGKGSKGGEPGSLGALNLPTEVVSSEFLTMEGRKFSSSRRVVIYVRDFLERYDADALRYYIIAAGPETQDTDFTWAEFVRRNNDELVATWGNLVNRSISMAAKNIGHIPEAGELTDADRAVLDASKAAFATVGERLNRAQFKAALQEAMRVVAEANKYFSEQAPWKLKKTDPKRMETVLHVALQLVSDAKTLLTPFLPASSNKVYEMLGGTGTWTGMPRLEEATDSIGGEEGVSTYPVITGDYADNEARWESIPIVPGTPLKPPTPLFRKLDQSVVDEELARLEAAAGA.

The 'HIGH' region signature appears at 14–24; it reads PYANGPRHIGH. Cys146, Cys149, Cys159, and Cys162 together coordinate Zn(2+). Positions 351 to 355 match the 'KMSKS' region motif; sequence KFSSS. Residue Ser354 coordinates ATP.

The protein belongs to the class-I aminoacyl-tRNA synthetase family. MetG type 1 subfamily. As to quaternary structure, monomer. Zn(2+) is required as a cofactor.

It is found in the cytoplasm. The enzyme catalyses tRNA(Met) + L-methionine + ATP = L-methionyl-tRNA(Met) + AMP + diphosphate. Is required not only for elongation of protein synthesis but also for the initiation of all mRNA translation through initiator tRNA(fMet) aminoacylation. The sequence is that of Methionine--tRNA ligase from Thermobifida fusca (strain YX).